A 287-amino-acid polypeptide reads, in one-letter code: MDKIVSPSKTKAIVEKYKFRFSKSLGQNFLIDQNILEDIVDGADIQPDDCVIEIGPGIGTLTQFIAEKAHKVVAIEIDRNLIPILKHTLADYQNVEVINQDVLKVDLHQLIADKFEGKPVKVIANLPYYVTTPIVMRFLEEKVPVDSLVIMIQKEVAVRMQAGPGTKDYGALSIAVQYYCNPEILLKVPPSVFIPQPKVESIVIKLQVYPEPKVKVERDDLMFALVKDAFGKRRKTLLNALSSGLLQLSKEIVRESLEAANIDENRRGETLTIEEYATLTKEVAARQ.

N28, L30, G55, E76, D101, and N125 together coordinate S-adenosyl-L-methionine.

The protein belongs to the class I-like SAM-binding methyltransferase superfamily. rRNA adenine N(6)-methyltransferase family. RsmA subfamily.

The protein resides in the cytoplasm. It catalyses the reaction adenosine(1518)/adenosine(1519) in 16S rRNA + 4 S-adenosyl-L-methionine = N(6)-dimethyladenosine(1518)/N(6)-dimethyladenosine(1519) in 16S rRNA + 4 S-adenosyl-L-homocysteine + 4 H(+). Its function is as follows. Specifically dimethylates two adjacent adenosines (A1518 and A1519) in the loop of a conserved hairpin near the 3'-end of 16S rRNA in the 30S particle. May play a critical role in biogenesis of 30S subunits. The sequence is that of Ribosomal RNA small subunit methyltransferase A from Alkaliphilus metalliredigens (strain QYMF).